The primary structure comprises 198 residues: Recombination protein RecR (198 aa).

The C4-type zinc finger occupies 57 to 72 (CSVCGHITENDPCYIC). The region spanning 80 to 175 (SVICVVEDDK…KVTRLAQGLS (96 aa)) is the Toprim domain.

It belongs to the RecR family.

In terms of biological role, may play a role in DNA repair. It seems to be involved in an RecBC-independent recombinational process of DNA repair. It may act with RecF and RecO. The chain is Recombination protein RecR from Staphylococcus aureus (strain MSSA476).